A 364-amino-acid polypeptide reads, in one-letter code: Hepatitis A virus cellular receptor 1 (364 aa).

An N-terminal signal peptide occupies residues 1–20; it reads MHPQVVILSLILHLADSVAG. In terms of domain architecture, Ig-like V-type spans 21 to 121; that stretch reads SVKVGGEAGP…WFNDMKITVS (101 aa). At 21–295 the chain is on the extracellular side; sequence SVKVGGEAGP…SLLTANTTKG (275 aa). Disulfide bonds link cysteine 36–cysteine 105, cysteine 46–cysteine 57, and cysteine 52–cysteine 104. Asparagine 65 carries N-linked (GlcNAc...) asparagine glycosylation. 12 tandem repeats follow at residues 138-143, 144-149, 150-155, 156-160, 161-165, 166-171, 172-177, 178-183, 184-189, 190-195, 196-201, and 202-207. The 12 X 6 AA approximate tandem repeats of V-P-T-T-T-T] stretch occupies residues 138–207; the sequence is VPTVTTVRTS…TTTSVPVTTT (70 aa). The disordered stretch occupies residues 216–257; sequence PLPRQNHEPVATSPSSPQPAETHPTTLQGAIRREPTSSPLYS. Over residues 227–243 the composition is skewed to polar residues; the sequence is TSPSSPQPAETHPTTLQ. Residues asparagine 263, asparagine 277, and asparagine 291 are each glycosylated (N-linked (GlcNAc...) asparagine). Residues 296–316 form a helical membrane-spanning segment; sequence IYAGVCISVLVLLALLGVIIA. Residues 317–364 lie on the Cytoplasmic side of the membrane; that stretch reads KKYFFKKEVQQLSVSFSSLQIKALQNAVEKEVQAEDNIYIENSLYATD. Glycyl lysine isopeptide (Lys-Gly) (interchain with G-Cter in ubiquitin) cross-links involve residues lysine 338 and lysine 346.

The protein belongs to the immunoglobulin superfamily. TIM family. Interacts with STAM. Interacts with SELPLG. As to quaternary structure, (Microbial infection) Interacts with hepatitis A virus capsid proteins. In terms of assembly, (Microbial infection) Interacts with Ebolavirus envelope glycoprotein GP. (Microbial infection) Interacts with Zika virus envelope protein E. In terms of processing, ubiquitinated at two lysine residues Lys-338 and Lys-346 on its cytoplasmic domain. Ubiquitination promotes receptor endocytosis and target receptors for lysosomal degradation and termination of receptor signaling. (Microbial infection) Ubiquitination is required for Dengue virus endocytosis. As to expression, widely expressed, with highest levels in kidney and testis. Expressed by activated CD4+ T-cells during the development of helper T-cells responses.

The protein localises to the cell membrane. Functionally, phosphatidylserine receptor that plays an important functional role in regulatory B-cells homeostasis including generation, expansion and suppressor functions. As P-selectin/SELPLG ligand, plays a specialized role in activated but not naive T-cell trafficking during inflammatory responses. Controls thereby T-cell accumulation in the inflamed central nervous system (CNS) and the induction of autoimmune disease. Also regulates expression of various anti-inflammatory cytokines and co-inhibitory ligands including IL10. Acts as a regulator of T-cell proliferation. May play a role in kidney injury and repair. In terms of biological role, (Microbial infection) Acts as a receptor for Hepatitis A virus. (Microbial infection) Acts as a receptor for Ebolavirus and Marburg virus by binding exposed phosphatidyl-serine at the surface of virion membrane. Serves as a dual receptor for Ebolavirus by also interacting with envelope glycoprotein GP. Its function is as follows. (Microbial infection) Acts as a receptor for Dengue virus by binding exposed phosphatidyl-serine at the surface of virion membrane. TIM1 and Dengue virus are co-internalized during virus entry. Functionally, (Microbial infection) Acts as a receptor for Zika virus by binding to envelope protein E. In terms of biological role, (Microbial infection) Plays a positive role in Chikungunya virus cell entry. This is Hepatitis A virus cellular receptor 1 (HAVCR1) from Homo sapiens (Human).